Here is a 338-residue protein sequence, read N- to C-terminus: DNA-directed RNA polymerase subunit alpha (338 aa).

The segment at 1–234 is alpha N-terminal domain (alpha-NTD); it reads MIERNWNELI…DQLQIFITFE (234 aa). Residues 250-338 form an alpha C-terminal domain (alpha-CTD) region; it reads FNPALLKKVD…DLAKKFEDQI (89 aa).

It belongs to the RNA polymerase alpha chain family. In terms of assembly, homodimer. The RNAP catalytic core consists of 2 alpha, 1 beta, 1 beta' and 1 omega subunit. When a sigma factor is associated with the core the holoenzyme is formed, which can initiate transcription.

It catalyses the reaction RNA(n) + a ribonucleoside 5'-triphosphate = RNA(n+1) + diphosphate. In terms of biological role, DNA-dependent RNA polymerase catalyzes the transcription of DNA into RNA using the four ribonucleoside triphosphates as substrates. In Caulobacter sp. (strain K31), this protein is DNA-directed RNA polymerase subunit alpha.